The following is a 222-amino-acid chain: Sugar fermentation stimulation protein homolog (222 aa).

It belongs to the SfsA family.

The protein is Sugar fermentation stimulation protein homolog of Thermotoga neapolitana (strain ATCC 49049 / DSM 4359 / NBRC 107923 / NS-E).